Reading from the N-terminus, the 380-residue chain is 1-deoxy-D-xylulose 5-phosphate reductoisomerase (380 aa).

Residues Thr-9, Gly-10, Ser-11, Val-12, Arg-36, and Asn-117 each coordinate NADPH. Position 118 (Lys-118) interacts with 1-deoxy-D-xylulose 5-phosphate. Glu-119 is an NADPH binding site. Residue Asp-139 participates in Mn(2+) binding. 1-deoxy-D-xylulose 5-phosphate-binding residues include Ser-140, Glu-141, Ser-165, and His-188. Glu-141 is a Mn(2+) binding site. Gly-194 serves as a coordination point for NADPH. 1-deoxy-D-xylulose 5-phosphate contacts are provided by Ser-201, Asn-206, Lys-207, and Glu-210. Glu-210 provides a ligand contact to Mn(2+).

It belongs to the DXR family. It depends on Mg(2+) as a cofactor. Mn(2+) serves as cofactor.

It carries out the reaction 2-C-methyl-D-erythritol 4-phosphate + NADP(+) = 1-deoxy-D-xylulose 5-phosphate + NADPH + H(+). It participates in isoprenoid biosynthesis; isopentenyl diphosphate biosynthesis via DXP pathway; isopentenyl diphosphate from 1-deoxy-D-xylulose 5-phosphate: step 1/6. Functionally, catalyzes the NADPH-dependent rearrangement and reduction of 1-deoxy-D-xylulose-5-phosphate (DXP) to 2-C-methyl-D-erythritol 4-phosphate (MEP). The polypeptide is 1-deoxy-D-xylulose 5-phosphate reductoisomerase (Aquifex aeolicus (strain VF5)).